Here is a 473-residue protein sequence, read N- to C-terminus: Serine/threonine-protein phosphatase T (473 aa).

TPR repeat units lie at residues 5–38, 40–72, and 73–106; these read ALEL…DSTN, ILYS…DPEY, and AKAY…APSD. Positions 159 to 472 are catalytic; the sequence is KQITKEFVED…MAYANGLLSG (314 aa). Aspartate 217, histidine 219, aspartate 246, and asparagine 278 together coordinate Mn(2+). The Proton donor/acceptor role is filled by histidine 279. 2 residues coordinate Mn(2+): histidine 327 and histidine 404.

Belongs to the PPP phosphatase family. PP-5 (PP-T) subfamily. Requires Mg(2+) as cofactor. The cofactor is Mn(2+).

The protein localises to the nucleus. The enzyme catalyses O-phospho-L-seryl-[protein] + H2O = L-seryl-[protein] + phosphate. It carries out the reaction O-phospho-L-threonyl-[protein] + H2O = L-threonyl-[protein] + phosphate. Functionally, protein phosphatase that specifically binds to and dephosphorylates the molecular chaperone Hsp90. Dephosphorylation positively regulates the Hsp90 chaperone machinery. The sequence is that of Serine/threonine-protein phosphatase T (ppt1) from Schizosaccharomyces pombe (strain 972 / ATCC 24843) (Fission yeast).